Consider the following 86-residue polypeptide: Putative membrane protein insertion efficiency factor (86 aa).

Belongs to the UPF0161 family.

The protein resides in the cell inner membrane. In terms of biological role, could be involved in insertion of integral membrane proteins into the membrane. This Histophilus somni (strain 129Pt) (Haemophilus somnus) protein is Putative membrane protein insertion efficiency factor.